Here is a 446-residue protein sequence, read N- to C-terminus: Protein IQ-DOMAIN 19 (446 aa).

The segment at 93-140 (IPGTPKEKRRWSFRRSSATGPPPPACAITLKDSPPPPPPPPPPPPLQQ) is disordered. Pro residues predominate over residues 125-139 (SPPPPPPPPPPPPLQ). IQ domains follow at residues 163–191 (EEFAAIKIQACYRSHLARKALRALKGLVK) and 192–214 (LQALVRGHLVRKQATATLRCMQA). The calmodulin-binding stretch occupies residues 214–231 (ALITLQAKAREQRIRMIG). The segment covering 332–345 (QSSKAKARSQSAPK) has biased composition (low complexity). The disordered stretch occupies residues 332-398 (QSSKAKARSQ…TAKESQQHHH (67 aa)). Over residues 379–392 (QRSSSQLGSNTAKE) the composition is skewed to polar residues.

The protein belongs to the IQD family. In terms of assembly, binds to multiple calmodulin (CaM) in the presence of Ca(2+) and CaM-like proteins.

The protein resides in the cytoplasm. Its subcellular location is the cytoskeleton. The protein localises to the cell membrane. In terms of biological role, may be involved in cooperative interactions with calmodulins or calmodulin-like proteins. Recruits calmodulin proteins to microtubules, thus being a potential scaffold in cellular signaling and trafficking. Acts as a positive regulator of trichome branch initiation. May associate with nucleic acids and regulate gene expression at the transcriptional or post-transcriptional level. The chain is Protein IQ-DOMAIN 19 from Arabidopsis thaliana (Mouse-ear cress).